A 296-amino-acid chain; its full sequence is 4-hydroxy-tetrahydrodipicolinate synthase (296 aa).

Thr-49 contributes to the pyruvate binding site. Tyr-137 serves as the catalytic Proton donor/acceptor. The active-site Schiff-base intermediate with substrate is Lys-165. Ile-207 lines the pyruvate pocket.

It belongs to the DapA family. In terms of assembly, homotetramer; dimer of dimers.

The protein resides in the cytoplasm. It carries out the reaction L-aspartate 4-semialdehyde + pyruvate = (2S,4S)-4-hydroxy-2,3,4,5-tetrahydrodipicolinate + H2O + H(+). It participates in amino-acid biosynthesis; L-lysine biosynthesis via DAP pathway; (S)-tetrahydrodipicolinate from L-aspartate: step 3/4. Its function is as follows. Catalyzes the condensation of (S)-aspartate-beta-semialdehyde [(S)-ASA] and pyruvate to 4-hydroxy-tetrahydrodipicolinate (HTPA). This is 4-hydroxy-tetrahydrodipicolinate synthase from Rhodopseudomonas palustris (strain BisA53).